Consider the following 115-residue polypeptide: Thionin-like protein 2 (115 aa).

An N-terminal signal peptide occupies residues 1-20 (MLVAVMIVMVIGNLLAQTAA).

The protein belongs to the plant thionin (TC 1.C.44) family. Is disulfide-linked.

It is found in the secreted. Functionally, may be involved in plant defense. The protein is Thionin-like protein 2 of Arabidopsis thaliana (Mouse-ear cress).